A 165-amino-acid polypeptide reads, in one-letter code: MVAMAAGPSGCLVPAFGLRLLLATVLQAVSAFGAEFSSEACRELGFSSNLLCSSCDLLGQFNLLQLDPDCRGCCQEEAQFETKKLYAGAILEVCGUKLGRFPQVQAFVRSDKPKLFRGLQIKYVRGSDPVLKLLDDNGNIAEELSILKWNTDSVEEFLSEKLERI.

Residues 1–31 (MVAMAAGPSGCLVPAFGLRLLLATVLQAVSA) form the signal peptide. Position 96 (Sec96) is a non-standard amino acid, selenocysteine.

As to quaternary structure, forms a tight complex with UGGT1/UGCGL1. Interacts with UGGT2/UGCGL2. Interacts with RDH11. In terms of processing, the N-terminus is blocked. Higher levels in prostate and thyroid gland.

Its subcellular location is the endoplasmic reticulum lumen. Functionally, may be involved in redox reactions associated with the formation of disulfide bonds. May contribute to the quality control of protein folding in the endoplasmic reticulum. May regulate protein folding by enhancing the catalytic activity of UGGT1/UGCGL1 and UGGT2/UGCGL2. This is Selenoprotein F from Homo sapiens (Human).